The chain runs to 447 residues: UDP-N-acetylglucosamine 1-carboxyvinyltransferase (447 aa).

Lys27–Asn28 contributes to the phosphoenolpyruvate binding site. Arg97 is a binding site for UDP-N-acetyl-alpha-D-glucosamine. Catalysis depends on Cys121, which acts as the Proton donor. Cys121 is modified (2-(S-cysteinyl)pyruvic acid O-phosphothioketal). UDP-N-acetyl-alpha-D-glucosamine is bound by residues Arg126–Leu130, Asp314, and Val336.

The protein belongs to the EPSP synthase family. MurA subfamily.

Its subcellular location is the cytoplasm. The catalysed reaction is phosphoenolpyruvate + UDP-N-acetyl-alpha-D-glucosamine = UDP-N-acetyl-3-O-(1-carboxyvinyl)-alpha-D-glucosamine + phosphate. Its pathway is cell wall biogenesis; peptidoglycan biosynthesis. Its function is as follows. Cell wall formation. Adds enolpyruvyl to UDP-N-acetylglucosamine. This Trichormus variabilis (strain ATCC 29413 / PCC 7937) (Anabaena variabilis) protein is UDP-N-acetylglucosamine 1-carboxyvinyltransferase.